We begin with the raw amino-acid sequence, 184 residues long: Large ribosomal subunit protein uL22 (184 aa).

This sequence belongs to the universal ribosomal protein uL22 family. As to quaternary structure, part of the 50S ribosomal subunit.

Its function is as follows. This protein binds specifically to 23S rRNA. It makes multiple contacts with different domains of the 23S rRNA in the assembled 50S subunit and ribosome. In terms of biological role, the globular domain of the protein is located near the polypeptide exit tunnel on the outside of the subunit, while an extended beta-hairpin is found that lines the wall of the exit tunnel in the center of the 70S ribosome. The protein is Large ribosomal subunit protein uL22 of Pyrobaculum calidifontis (strain DSM 21063 / JCM 11548 / VA1).